Consider the following 246-residue polypeptide: Hsp70 nucleotide exchange factor fes-1 (246 aa).

Positions 23–40 (QSYHSNGAPTPNNNSGPA) are enriched in polar residues. Residues 23 to 63 (QSYHSNGAPTPNNNSGPATGTGAVATSPAPQVTGSGPRPVD) form a disordered region. ARM repeat units lie at residues 48–92 (TSPA…DPSP), 113–152 (LDNA…TAVQ), 155–196 (QKTQ…SAVR), and 214–244 (HEVL…NKAK).

Belongs to the FES1 family.

It localises to the cytoplasm. Its function is as follows. Functions as a nucleotide exchange factor (NEF) for Hsp70 chaperones which accelerates the release of ADP. Required for fully efficient Hsp70-mediated folding of proteins. The polypeptide is Hsp70 nucleotide exchange factor fes-1 (fes-1) (Neurospora crassa (strain ATCC 24698 / 74-OR23-1A / CBS 708.71 / DSM 1257 / FGSC 987)).